The following is a 427-amino-acid chain: NAD kinase 2, mitochondrial (427 aa).

Residues 1-33 (MSLCLRLLCSVCGAAALRVPLGVSSLRALSGSA) constitute a mitochondrion transit peptide.

The protein belongs to the NAD kinase family. In terms of assembly, homodimer.

The protein resides in the mitochondrion. The catalysed reaction is NAD(+) + ATP = ADP + NADP(+) + H(+). Mitochondrial NAD(+) kinase that phosphorylates NAD(+) to yield NADP(+). Can use both ATP or inorganic polyphosphate as the phosphoryl donor. The chain is NAD kinase 2, mitochondrial (nadk2) from Xenopus tropicalis (Western clawed frog).